A 626-amino-acid chain; its full sequence is Myelin-associated glycoprotein (626 aa).

The first 19 residues, 1–19 (MIFLTALPLFWIMISASRG), serve as a signal peptide directing secretion. Residues 20 to 325 (GHWGAWMPSS…RTVGLSVMYA (306 aa)) form an interaction with RTN4R and RTN4RL2 region. The Extracellular segment spans residues 20–516 (GHWGAWMPSS…HRLMWAKIGP (497 aa)). The region spanning 22–120 (WGAWMPSSIS…LGGKYYFRGD (99 aa)) is the Ig-like V-type domain. Cystine bridges form between C37/C165, C42/C100, and C159/C217. Position 65–67 (65–67 (YPK)) interacts with a ganglioside GT1b (d18:1(4E)). A glycan (N-linked (GlcNAc...) asparagine) is linked at N99. A glycan (N-linked (GlcNAc...) asparagine; partial) is linked at N106. Residues R118 and 124–128 (YNQYT) contribute to the a ganglioside GT1b (d18:1(4E)) site. Ig-like C2-type domains are found at residues 139 to 237 (NTPN…MDVK), 241 to 325 (VIVE…VMYA), 327 to 412 (WKPT…VEFA), and 413 to 508 (PVLL…GAHR). 2 N-linked (GlcNAc...) asparagine glycosylation sites follow: N223 and N246. C261 and C305 are joined by a disulfide. N315 carries an N-linked (GlcNAc...) asparagine glycan. C347 and C392 are oxidised to a cystine. N406 carries an N-linked (GlcNAc...) asparagine glycan. 2 disulfide bridges follow: C421–C430 and C432–C488. N-linked (GlcNAc...) asparagine glycosylation is found at N450 and N454. The helical transmembrane segment at 517 to 536 (VGAVVAFAILIAIVCYITQT) threads the bilayer. Residue C531 is the site of S-palmitoyl cysteine attachment. Residues 537-626 (RRKKNVTESP…LAEYAEIRVK (90 aa)) lie on the Cytoplasmic side of the membrane. 3 positions are modified to phosphoserine: S545, S547, and S549. The required for normal axon myelination in the central nervous system stretch occupies residues 577 to 626 (LGSERRLLGLRGEPPELDLSYSHSDLGKRPTKDSYTLTEELAEYAEIRVK). A disordered region spans residues 582–608 (RLLGLRGEPPELDLSYSHSDLGKRPTK).

This sequence belongs to the immunoglobulin superfamily. SIGLEC (sialic acid binding Ig-like lectin) family. In terms of assembly, monomer and homodimer. Interacts (via the first three N-terminal Ig-like domains) with RTN4R and RTN4RL2. Interacts with RTN4R. Interacts with isoform 2 of BSG. N-glycosylated. In terms of processing, phosphorylated on tyrosine residues. Post-translationally, ubiquitinated, leading to proteasomal degradation. In terms of tissue distribution, both isoform 1 and isoform 2 are detected in myelinated structures in the central and peripheral nervous system, in periaxonal myelin and at Schmidt-Lanterman incisures. Detected in optic nerve, in oligodendroglia and in periaxonal myelin sheaths. Detected in compact myelin (at protein level). Both isoform 1 and isoform 2 are detected in the central and peripheral nervous system.

Its subcellular location is the cell membrane. The protein localises to the membrane raft. Adhesion molecule that mediates interactions between myelinating cells and neurons by binding to neuronal sialic acid-containing gangliosides and to the glycoproteins RTN4R and RTN4RL2. Not required for initial myelination, but seems to play a role in the maintenance of normal axon myelination. Protects motoneurons against apoptosis, also after injury; protection against apoptosis is probably mediated via interaction with neuronal RTN4R and RTN4RL2. Required to prevent degeneration of myelinated axons in adults; this probably depends on binding to gangliosides on the axon cell membrane. Negative regulator of neurite outgrowth; in dorsal root ganglion neurons the inhibition is mediated primarily via binding to neuronal RTN4R or RTN4RL2 and to a lesser degree via binding to neuronal gangliosides. In cerebellar granule cells the inhibition is mediated primarily via binding to neuronal gangliosides. In sensory neurons, inhibition of neurite extension depends only partially on RTN4R, RTN4RL2 and gangliosides. Inhibits axon longitudinal growth. Inhibits axon outgrowth by binding to RTN4R. Preferentially binds to alpha-2,3-linked sialic acid. Binds ganglioside Gt1b. The sequence is that of Myelin-associated glycoprotein (MAG) from Homo sapiens (Human).